A 123-amino-acid polypeptide reads, in one-letter code: Polyadenylate-binding protein-interacting protein 2B (123 aa).

Position 1 is an N-acetylmethionine (M1). A compositionally biased stretch (polar residues) spans 1 to 13; sequence MNGSNMANTSPSV. Disordered stretches follow at residues 1 to 30 and 91 to 123; these read MNGSNMANTSPSVKSKEDQGLSGHDEKENP and NGLSVSEGHDSEDILSKSNLNPDAKEFIPGEKY. 2 stretches are compositionally biased toward basic and acidic residues: residues 14-30 and 113-123; these read KSKEDQGLSGHDEKENP and DAKEFIPGEKY.

It belongs to the PAIP2 family. As to quaternary structure, interacts (via central acidic portion and C-terminus) with PABPC1 (via the second and third RRM domains and the C-terminus). Ubiquitinated in vitro. Expressed in brain, cervix, heart, liver, ovary, kidney, prostate and testis.

Its function is as follows. Inhibits translation of capped and polyadenylated mRNAs by displacing PABPC1 from the poly(A) tail. The protein is Polyadenylate-binding protein-interacting protein 2B (PAIP2B) of Homo sapiens (Human).